We begin with the raw amino-acid sequence, 148 residues long: Large ribosomal subunit protein bL9 (148 aa).

This sequence belongs to the bacterial ribosomal protein bL9 family.

Binds to the 23S rRNA. The polypeptide is Large ribosomal subunit protein bL9 (Stutzerimonas stutzeri (strain A1501) (Pseudomonas stutzeri)).